Reading from the N-terminus, the 305-residue chain is Ribonuclease BN (305 aa).

Residues His63, His65, Asp67, His68, His141, Asp212, and His270 each contribute to the Zn(2+) site. Catalysis depends on Asp67, which acts as the Proton acceptor.

The protein belongs to the RNase Z family. RNase BN subfamily. As to quaternary structure, homodimer. Requires Zn(2+) as cofactor.

Functionally, zinc phosphodiesterase, which has both exoribonuclease and endoribonuclease activities. In Proteus mirabilis (strain HI4320), this protein is Ribonuclease BN.